The primary structure comprises 836 residues: Protein translocase subunit SecA (836 aa).

Residues Gln-85, 103-107 (GEGKT), and Asp-492 each bind ATP. Zn(2+) contacts are provided by Cys-820, Cys-822, Cys-831, and Cys-832.

Belongs to the SecA family. Monomer and homodimer. Part of the essential Sec protein translocation apparatus which comprises SecA, SecYEG and auxiliary proteins SecDF. Other proteins may also be involved. The cofactor is Zn(2+).

The protein localises to the cell membrane. Its subcellular location is the cytoplasm. The catalysed reaction is ATP + H2O + cellular proteinSide 1 = ADP + phosphate + cellular proteinSide 2.. Part of the Sec protein translocase complex. Interacts with the SecYEG preprotein conducting channel. Has a central role in coupling the hydrolysis of ATP to the transfer of proteins into and across the cell membrane, serving as an ATP-driven molecular motor driving the stepwise translocation of polypeptide chains across the membrane. In Clostridium botulinum (strain Eklund 17B / Type B), this protein is Protein translocase subunit SecA.